Consider the following 479-residue polypeptide: UDP-N-acetylmuramate--L-alanine ligase (479 aa).

128–134 lines the ATP pocket; sequence GAHGKTT.

Belongs to the MurCDEF family.

The protein localises to the cytoplasm. The enzyme catalyses UDP-N-acetyl-alpha-D-muramate + L-alanine + ATP = UDP-N-acetyl-alpha-D-muramoyl-L-alanine + ADP + phosphate + H(+). It functions in the pathway cell wall biogenesis; peptidoglycan biosynthesis. Its function is as follows. Cell wall formation. In Psychrobacter arcticus (strain DSM 17307 / VKM B-2377 / 273-4), this protein is UDP-N-acetylmuramate--L-alanine ligase.